The sequence spans 169 residues: Cilia- and flagella-associated protein HOATZ (169 aa).

Disordered regions lie at residues 1 to 21, 52 to 89, and 144 to 169; these read METG…MCPP, SQLV…LASN, and KAKE…KTLD. The segment covering 75 to 89 has biased composition (polar residues); the sequence is SENSHSSQSFHLASN.

Belongs to the HOATZ family.

The protein localises to the cytoplasm. The protein resides in the cell projection. It localises to the cilium. In terms of biological role, required for motile ciliogenesis and flagellar genesis by mediating the maturation of the glycolytic enzyme ENO4. This Homo sapiens (Human) protein is Cilia- and flagella-associated protein HOATZ.